A 122-amino-acid polypeptide reads, in one-letter code: Large ribosomal subunit protein uL14 (122 aa).

The protein belongs to the universal ribosomal protein uL14 family. Part of the 50S ribosomal subunit. Forms a cluster with proteins L3 and L19. In the 70S ribosome, L14 and L19 interact and together make contacts with the 16S rRNA in bridges B5 and B8.

Binds to 23S rRNA. Forms part of two intersubunit bridges in the 70S ribosome. This Trichodesmium erythraeum (strain IMS101) protein is Large ribosomal subunit protein uL14.